A 156-amino-acid polypeptide reads, in one-letter code: MQLLIVAVGHKMPSWIEEGFSEYAKRMPPELRIELREIKPEQRSGSRTAATVMQLEAARIEAALPKGCRMIALDERGKDLTTVALAESLTGWQQEGGDIAFVIGGADGLDPALKAKARTLIRLSSLTLPHGMVRVLLAEQLYRAWSITQNHPYHRV.

S-adenosyl-L-methionine is bound by residues leucine 73, glycine 104, and 123 to 128; that span reads LSSLTL.

Belongs to the RNA methyltransferase RlmH family. In terms of assembly, homodimer.

The protein resides in the cytoplasm. The catalysed reaction is pseudouridine(1915) in 23S rRNA + S-adenosyl-L-methionine = N(3)-methylpseudouridine(1915) in 23S rRNA + S-adenosyl-L-homocysteine + H(+). Functionally, specifically methylates the pseudouridine at position 1915 (m3Psi1915) in 23S rRNA. The polypeptide is Ribosomal RNA large subunit methyltransferase H (Ralstonia pickettii (strain 12J)).